The chain runs to 429 residues: 3-phosphoshikimate 1-carboxyvinyltransferase (429 aa).

Positions 23, 24, and 28 each coordinate 3-phosphoshikimate. Lysine 23 serves as a coordination point for phosphoenolpyruvate. Positions 95 and 123 each coordinate phosphoenolpyruvate. 3-phosphoshikimate contacts are provided by serine 168, glutamine 170, aspartate 316, and lysine 343. Position 170 (glutamine 170) interacts with phosphoenolpyruvate. Aspartate 316 acts as the Proton acceptor in catalysis. Residues arginine 347 and arginine 389 each coordinate phosphoenolpyruvate.

Belongs to the EPSP synthase family. As to quaternary structure, monomer.

It is found in the cytoplasm. It catalyses the reaction 3-phosphoshikimate + phosphoenolpyruvate = 5-O-(1-carboxyvinyl)-3-phosphoshikimate + phosphate. It participates in metabolic intermediate biosynthesis; chorismate biosynthesis; chorismate from D-erythrose 4-phosphate and phosphoenolpyruvate: step 6/7. Its function is as follows. Catalyzes the transfer of the enolpyruvyl moiety of phosphoenolpyruvate (PEP) to the 5-hydroxyl of shikimate-3-phosphate (S3P) to produce enolpyruvyl shikimate-3-phosphate and inorganic phosphate. This chain is 3-phosphoshikimate 1-carboxyvinyltransferase, found in Bacillus thuringiensis subsp. konkukian (strain 97-27).